Consider the following 165-residue polypeptide: Crossover junction endodeoxyribonuclease RuvC (165 aa).

Residues D7, E67, and D140 contribute to the active site. Mg(2+)-binding residues include D7, E67, and D140.

The protein belongs to the RuvC family. Homodimer which binds Holliday junction (HJ) DNA. The HJ becomes 2-fold symmetrical on binding to RuvC with unstacked arms; it has a different conformation from HJ DNA in complex with RuvA. In the full resolvosome a probable DNA-RuvA(4)-RuvB(12)-RuvC(2) complex forms which resolves the HJ. Requires Mg(2+) as cofactor.

Its subcellular location is the cytoplasm. It catalyses the reaction Endonucleolytic cleavage at a junction such as a reciprocal single-stranded crossover between two homologous DNA duplexes (Holliday junction).. Functionally, the RuvA-RuvB-RuvC complex processes Holliday junction (HJ) DNA during genetic recombination and DNA repair. Endonuclease that resolves HJ intermediates. Cleaves cruciform DNA by making single-stranded nicks across the HJ at symmetrical positions within the homologous arms, yielding a 5'-phosphate and a 3'-hydroxyl group; requires a central core of homology in the junction. The consensus cleavage sequence is 5'-(A/T)TT(C/G)-3'. Cleavage occurs on the 3'-side of the TT dinucleotide at the point of strand exchange. HJ branch migration catalyzed by RuvA-RuvB allows RuvC to scan DNA until it finds its consensus sequence, where it cleaves and resolves the cruciform DNA. In Thermotoga petrophila (strain ATCC BAA-488 / DSM 13995 / JCM 10881 / RKU-1), this protein is Crossover junction endodeoxyribonuclease RuvC.